The chain runs to 409 residues: Tyrosine--tRNA ligase (409 aa).

Residue Tyr-35 coordinates L-tyrosine. The short motif at 40-49 (CTAESLHVGS) is the 'HIGH' region element. The L-tyrosine site is built by Tyr-172 and Gln-176. A 'KMSKS' region motif is present at residues 232-236 (KMGKT). Residue Lys-235 coordinates ATP. One can recognise an S4 RNA-binding domain in the interval 343–409 (ISILDLVILS…KKKHIKVELI (67 aa)).

It belongs to the class-I aminoacyl-tRNA synthetase family. TyrS type 1 subfamily. In terms of assembly, homodimer.

It localises to the cytoplasm. It catalyses the reaction tRNA(Tyr) + L-tyrosine + ATP = L-tyrosyl-tRNA(Tyr) + AMP + diphosphate + H(+). Functionally, catalyzes the attachment of tyrosine to tRNA(Tyr) in a two-step reaction: tyrosine is first activated by ATP to form Tyr-AMP and then transferred to the acceptor end of tRNA(Tyr). This chain is Tyrosine--tRNA ligase, found in Pelagibacter ubique (strain HTCC1062).